The chain runs to 350 residues: Ferredoxin--NADP reductase (350 aa).

Positions 14, 33, 41, 46, 86, 121, 286, and 327 each coordinate FAD.

It belongs to the ferredoxin--NADP reductase type 2 family. In terms of assembly, homodimer. FAD is required as a cofactor.

It catalyses the reaction 2 reduced [2Fe-2S]-[ferredoxin] + NADP(+) + H(+) = 2 oxidized [2Fe-2S]-[ferredoxin] + NADPH. The sequence is that of Ferredoxin--NADP reductase from Flavobacterium johnsoniae (strain ATCC 17061 / DSM 2064 / JCM 8514 / BCRC 14874 / CCUG 350202 / NBRC 14942 / NCIMB 11054 / UW101) (Cytophaga johnsonae).